A 242-amino-acid chain; its full sequence is Polycomb group RING finger protein 3 (242 aa).

The segment at 17–56 adopts an RING-type zinc-finger fold; the sequence is CRLCNGYLIDATTVTECLHTFCRSCLVKYLEENNTCPTCR. The disordered stretch occupies residues 120–149; the sequence is EAHRNGETKTDEHTHKEPPEEKQEEDHDYH.

Component of a PRC1-like complex.

It is found in the nucleus. In terms of biological role, component of a Polycomb group (PcG) multiprotein PRC1-like complex, a complex class required to maintain the transcriptionally repressive state of many genes, including Hox genes, throughout development. PcG PRC1 complex acts via chromatin remodeling and modification of histones; it mediates monoubiquitination of histone H2A 'Lys-119', rendering chromatin heritably changed in its expressibility. Within the PRC1-like complex, regulates RNF2 ubiquitin ligase activity. In Xenopus tropicalis (Western clawed frog), this protein is Polycomb group RING finger protein 3 (pcgf3).